Consider the following 92-residue polypeptide: Acyl carrier protein AcpXL (92 aa).

Residues 2–88 (TATFDKVADI…NLCAKIDELK (87 aa)) form the Carrier domain. O-(pantetheine 4'-phosphoryl)serine is present on Ser-37.

In terms of processing, 4'-phosphopantetheine is transferred from CoA to a specific serine of apo-ACP by AcpS. This modification is essential for activity because fatty acids are bound in thioester linkage to the sulfhydryl of the prosthetic group.

It is found in the cytoplasm. It functions in the pathway glycolipid biosynthesis; KDO(2)-lipid A biosynthesis. In terms of biological role, carrier of the growing fatty acid chain in fatty acid biosynthesis. Is involved in the transfer of long hydroxylated fatty acids to lipid A. Is acylated predominantly with 27-hydroxyoctacosanoic acid. This Rhizobium etli (strain ATCC 51251 / DSM 11541 / JCM 21823 / NBRC 15573 / CFN 42) protein is Acyl carrier protein AcpXL (acpXL).